The sequence spans 116 residues: Non-specific lipid-transfer protein (116 aa).

The signal sequence occupies residues 1 to 25; the sequence is MASMVMNVLCVAVACMVFSASYADA. 4 disulfide bridges follow: cysteine 28–cysteine 75, cysteine 38–cysteine 52, cysteine 53–cysteine 98, and cysteine 73–cysteine 112.

The protein belongs to the plant LTP family.

Functionally, plant non-specific lipid-transfer proteins transfer phospholipids as well as galactolipids across membranes. May play a role in wax or cutin deposition in the cell walls of expanding epidermal cells and certain secretory tissues. The chain is Non-specific lipid-transfer protein from Gerbera hybrida (Daisy).